Consider the following 169-residue polypeptide: ATP synthase subunit b (169 aa).

The helical transmembrane segment at 14–34 (TFLAMLISFLILVFILQQVAF) threads the bilayer.

It belongs to the ATPase B chain family. As to quaternary structure, F-type ATPases have 2 components, F(1) - the catalytic core - and F(0) - the membrane proton channel. F(1) has five subunits: alpha(3), beta(3), gamma(1), delta(1), epsilon(1). F(0) has four main subunits: a(1), b(2) and c(10-14). The alpha and beta chains form an alternating ring which encloses part of the gamma chain. F(1) is attached to F(0) by a central stalk formed by the gamma and epsilon chains, while a peripheral stalk is formed by the delta and b chains.

It localises to the cell membrane. Its function is as follows. F(1)F(0) ATP synthase produces ATP from ADP in the presence of a proton or sodium gradient. F-type ATPases consist of two structural domains, F(1) containing the extramembraneous catalytic core and F(0) containing the membrane proton channel, linked together by a central stalk and a peripheral stalk. During catalysis, ATP synthesis in the catalytic domain of F(1) is coupled via a rotary mechanism of the central stalk subunits to proton translocation. In terms of biological role, component of the F(0) channel, it forms part of the peripheral stalk, linking F(1) to F(0). This Heliobacterium modesticaldum (strain ATCC 51547 / Ice1) protein is ATP synthase subunit b.